The primary structure comprises 119 residues: Holo-[acyl-carrier-protein] synthase (119 aa).

The Mg(2+) site is built by aspartate 8 and glutamate 59.

The protein belongs to the P-Pant transferase superfamily. AcpS family. Mg(2+) serves as cofactor.

It is found in the cytoplasm. The enzyme catalyses apo-[ACP] + CoA = holo-[ACP] + adenosine 3',5'-bisphosphate + H(+). Transfers the 4'-phosphopantetheine moiety from coenzyme A to a Ser of acyl-carrier-protein. This Staphylococcus aureus (strain USA300) protein is Holo-[acyl-carrier-protein] synthase.